The chain runs to 265 residues: 4-hydroxy-tetrahydrodipicolinate reductase (265 aa).

NAD(+) is bound by residues 7–12 and Asp33; that span reads GASGRM. Arg34 provides a ligand contact to NADP(+). Residues 96 to 98 and 120 to 123 each bind NAD(+); these read GTT and AANM. The Proton donor/acceptor role is filled by His153. Position 154 (His154) interacts with (S)-2,3,4,5-tetrahydrodipicolinate. The active-site Proton donor is Lys157. 163–164 lines the (S)-2,3,4,5-tetrahydrodipicolinate pocket; the sequence is GT.

Belongs to the DapB family.

The protein resides in the cytoplasm. It carries out the reaction (S)-2,3,4,5-tetrahydrodipicolinate + NAD(+) + H2O = (2S,4S)-4-hydroxy-2,3,4,5-tetrahydrodipicolinate + NADH + H(+). It catalyses the reaction (S)-2,3,4,5-tetrahydrodipicolinate + NADP(+) + H2O = (2S,4S)-4-hydroxy-2,3,4,5-tetrahydrodipicolinate + NADPH + H(+). It functions in the pathway amino-acid biosynthesis; L-lysine biosynthesis via DAP pathway; (S)-tetrahydrodipicolinate from L-aspartate: step 4/4. Its function is as follows. Catalyzes the conversion of 4-hydroxy-tetrahydrodipicolinate (HTPA) to tetrahydrodipicolinate. The chain is 4-hydroxy-tetrahydrodipicolinate reductase from Burkholderia multivorans (strain ATCC 17616 / 249).